The sequence spans 437 residues: MSPGSVLKTAPGAYLSGFGNEFATEAVPGALPEGQNSPQRAPFGLYAEQLSGSAFTAPRRENRRSWLYRLRPSANHPAFQPLAQGLLRSGPFDEVPASPNRLRWSPQPPPAQPTDFVDGLVTYAGNGDAASGAGISIHLYAANRSMVDRVFFDADGELLIVPQAGRLRLVTELGVLDVAPGEIAVVPRGVRFRAELPEGQAAGYVCENHGAFFRLPDLGPIGANGLANPRDFLTPVAAFEDVDRPTEVVQKFLGRLWSARYSYSPLDVVAWHGNLVPYKYDLARFNTINTVSFDHPDPSIFTVLTSPSEVPGTANCDFVIFPPRWMVAEHTFRPPWFHRNVMSEFMGLVHGVYDAKAGGFAPGGGSLHNCMSGHGPDRTSYEQAIQADLKPHKIKDTLAFMFESRWVIRPTRFAMETPALQQDYDACWAGFQKAKLP.

The active-site Proton acceptor is the histidine 295. Fe cation is bound by residues histidine 338 and glutamate 344. Homogentisate is bound by residues tyrosine 353 and histidine 374. Residue histidine 374 coordinates Fe cation.

Belongs to the homogentisate dioxygenase family. As to quaternary structure, hexamer; dimer of trimers. It depends on Fe cation as a cofactor.

It carries out the reaction homogentisate + O2 = 4-maleylacetoacetate + H(+). It participates in amino-acid degradation; L-phenylalanine degradation; acetoacetate and fumarate from L-phenylalanine: step 4/6. Involved in the catabolism of homogentisate (2,5-dihydroxyphenylacetate or 2,5-OH-PhAc), a central intermediate in the degradation of phenylalanine and tyrosine. Catalyzes the oxidative ring cleavage of the aromatic ring of homogentisate to yield maleylacetoacetate. In Myxococcus xanthus (strain DK1622), this protein is Homogentisate 1,2-dioxygenase.